Here is a 214-residue protein sequence, read N- to C-terminus: 3,4-dihydroxy-2-butanone 4-phosphate synthase (214 aa).

Residues 37–38, D42, 150–154, and E174 contribute to the D-ribulose 5-phosphate site; these read RE and RRGHT. E38 contacts Mg(2+). Position 153 (H153) interacts with Mg(2+).

It belongs to the DHBP synthase family. As to quaternary structure, homodimer. Requires Mg(2+) as cofactor. Mn(2+) serves as cofactor.

The enzyme catalyses D-ribulose 5-phosphate = (2S)-2-hydroxy-3-oxobutyl phosphate + formate + H(+). The protein operates within cofactor biosynthesis; riboflavin biosynthesis; 2-hydroxy-3-oxobutyl phosphate from D-ribulose 5-phosphate: step 1/1. Catalyzes the conversion of D-ribulose 5-phosphate to formate and 3,4-dihydroxy-2-butanone 4-phosphate. This Nitratidesulfovibrio vulgaris (strain DP4) (Desulfovibrio vulgaris) protein is 3,4-dihydroxy-2-butanone 4-phosphate synthase.